A 329-amino-acid chain; its full sequence is Vacuolar protein sorting-associated protein 26B-like (329 aa).

The protein belongs to the VPS26 family.

The protein localises to the cytoplasm. The protein resides in the membrane. In terms of biological role, probable component of the retromer complex, a complex required to retrieve lysosomal enzyme receptors (IGF2R and M6PR) from endosomes to the trans-Golgi network. This is Vacuolar protein sorting-associated protein 26B-like (vps26bl) from Danio rerio (Zebrafish).